The sequence spans 132 residues: Replication enhancer protein (132 aa).

The protein belongs to the geminiviridae replication enhancer protein family. In terms of assembly, homooligomer. Interacts with the replication-associated protein (REP). Interacts with host proliferating cell nuclear antigen (PCNA). Interacts with host retinoblastoma-related protein 1 (RBR1), and may thereby deregulate the host cell cycle. Oligomerization and interaction with PCNA are necessary for optimal replication enhancement.

Functionally, increases viral DNA accumulation. Enhances infectivity and symptom expression. This Solanum lycopersicum (Tomato) protein is Replication enhancer protein.